We begin with the raw amino-acid sequence, 354 residues long: tRNA N6-adenosine threonylcarbamoyltransferase (354 aa).

Fe cation-binding residues include His-111 and His-115. Substrate contacts are provided by residues 134 to 138 (LVSGG), Asp-167, Gly-180, and Asn-279. Asp-319 provides a ligand contact to Fe cation.

It belongs to the KAE1 / TsaD family. Fe(2+) serves as cofactor.

It is found in the cytoplasm. The enzyme catalyses L-threonylcarbamoyladenylate + adenosine(37) in tRNA = N(6)-L-threonylcarbamoyladenosine(37) in tRNA + AMP + H(+). Required for the formation of a threonylcarbamoyl group on adenosine at position 37 (t(6)A37) in tRNAs that read codons beginning with adenine. Is involved in the transfer of the threonylcarbamoyl moiety of threonylcarbamoyl-AMP (TC-AMP) to the N6 group of A37, together with TsaE and TsaB. TsaD likely plays a direct catalytic role in this reaction. This chain is tRNA N6-adenosine threonylcarbamoyltransferase, found in Neisseria meningitidis serogroup A / serotype 4A (strain DSM 15465 / Z2491).